Reading from the N-terminus, the 739-residue chain is Homeobox protein SIX5 (739 aa).

Composition is skewed to low complexity over residues 1 to 24 (MATL…AAAA), 34 to 61 (QLLQ…AAGA), and 74 to 83 (PEAASEPPTG). 4 disordered regions span residues 1-84 (MATL…PTGL), 251-294 (NRRQ…AAPV), 361-381 (LTGG…SETK), and 617-650 (LSAQ…FPAP). Residues 201–260 (GEETVYCFKERSRAALKACYRGNRYPTPDEKRRLATLTGLSLTQVSNWFKNRRQRDRTGA) constitute a DNA-binding region (homeobox). Basic and acidic residues predominate over residues 279–289 (ESSRSPEDLER). Positions 617-646 (LSAQQPPPAAATTSSTSLPFSPDSPGLLPN) are enriched in low complexity.

This sequence belongs to the SIX/Sine oculis homeobox family. Probably binds DNA dimer. Interacts with EYA3, and probably EYA1 and EYA2. As to expression, expressed in adult but not in fetal eyes. Found in corneal epithelium and endothelium, lens epithelium, ciliary body epithelia, cellular layers of the retina and the sclera.

The protein localises to the cytoplasm. Its subcellular location is the nucleus. Functionally, transcription factor that is thought to be involved in regulation of organogenesis. May be involved in determination and maintenance of retina formation. Binds a 5'-GGTGTCAG-3' motif present in the ARE regulatory element of ATP1A1. Binds a 5'-TCA[AG][AG]TTNC-3' motif present in the MEF3 element in the myogenin promoter, and in the IGFBP5 promoter. Thought to be regulated by association with Dach and Eya proteins, and seems to be coactivated by EYA1, EYA2 and EYA3. The polypeptide is Homeobox protein SIX5 (SIX5) (Homo sapiens (Human)).